A 234-amino-acid polypeptide reads, in one-letter code: Sugar fermentation stimulation protein homolog (234 aa).

The protein belongs to the SfsA family.

In Edwardsiella ictaluri (strain 93-146), this protein is Sugar fermentation stimulation protein homolog.